A 392-amino-acid chain; its full sequence is Phospho-N-acetylmuramoyl-pentapeptide-transferase (392 aa).

Helical transmembrane passes span 29–49 (AVLA…WVIG), 76–96 (TMGG…WFDL), 100–120 (FVWI…VDDW), 137–157 (YLWQ…CISE), 192–212 (AVSY…VIVG), 225–245 (GLAI…AYVT), 262–282 (SGEL…FLWF), 289–309 (VFMG…IAII), 314–334 (IVLA…MLQV), and 369–389 (QVVV…LSTL).

This sequence belongs to the glycosyltransferase 4 family. MraY subfamily. Requires Mg(2+) as cofactor.

The protein resides in the cell inner membrane. The catalysed reaction is UDP-N-acetyl-alpha-D-muramoyl-L-alanyl-gamma-D-glutamyl-meso-2,6-diaminopimeloyl-D-alanyl-D-alanine + di-trans,octa-cis-undecaprenyl phosphate = di-trans,octa-cis-undecaprenyl diphospho-N-acetyl-alpha-D-muramoyl-L-alanyl-D-glutamyl-meso-2,6-diaminopimeloyl-D-alanyl-D-alanine + UMP. It participates in cell wall biogenesis; peptidoglycan biosynthesis. In terms of biological role, catalyzes the initial step of the lipid cycle reactions in the biosynthesis of the cell wall peptidoglycan: transfers peptidoglycan precursor phospho-MurNAc-pentapeptide from UDP-MurNAc-pentapeptide onto the lipid carrier undecaprenyl phosphate, yielding undecaprenyl-pyrophosphoryl-MurNAc-pentapeptide, known as lipid I. This Verminephrobacter eiseniae (strain EF01-2) protein is Phospho-N-acetylmuramoyl-pentapeptide-transferase.